The chain runs to 43 residues: MEPATLITIFLSCFLVGVTGYALYTAFGQPSKELRDPFEEHED.

The chain crosses the membrane as a helical span at residues 7–27 (ITIFLSCFLVGVTGYALYTAF).

Belongs to the PsbN family.

It localises to the plastid. The protein localises to the chloroplast thylakoid membrane. In terms of biological role, may play a role in photosystem I and II biogenesis. The chain is Protein PsbN from Klebsormidium bilatum (Filamentous green alga).